The chain runs to 973 residues: MPIKLIQVQRKLNVGINTVVEFLHRNGFSVEDNPNTRISDEQYALLVKEFGKDLPEKDRNFAADRMRKEVPSVKEEKTAEIKTVIPEEFRPKIVMKGHIDLDGGQHKKQQEEPKAKEEPKVKEEPKVKEEPKVKEAPAAPAAQAPVKPAQPAQAPTEKKEEKVIVVEVEKEKTVEKQPVVAEPKVESVKPEQEVEKTEEKDDNLFRLNSVKLESKIKVTGKIDLDALNQSTRPKKKTKEEKRKERDEKQKFNNNRPGNNSNGPGAPHKSPNSPTLIKPNAPAKPGEEGDAKKKRKRIKKDRVDVNNTPGTNYPRPNRDDRPNNDRKPRLKKPVKAEVSEEDVQKQIKETLARLTNKNNKNNKGAKYRRDKRDAAVKREHELMEQEELESKVLKLTEFVTANDLANMMDVSVTEVIGTCMSIGLMVSINQRLDAETINIVAEEFGYKTEYVSADVVEAINADEEDDNEEDWVARPPIVTVMGHVDHGKTSLLDNIRSANVIAGEAGGITQHIGAYNVKLQNGRRITFLDTPGHEAFTAMRARGAKVTDIAIIIVAADDNVMPQTIEAINHASAAGVPIVFAINKIDKPHANPEKIKEELANMNYLVEDWGGKYQSQEISAKKGIGVEELLEKVLLEADLLDLKANPKKRAVGSIIESSLDKGRGYVSTILVENGTLKMGDIVLAGTHQGRIKAMFNERNQRVEKAGPSEPVLILGLNGAPQAGDTFNVLETEQEAREIANRREQLQRELGLRTQKMLTLDDIGRRIAVGNFQELNVIVKGDVDGSVEALSDSLIRLSTEEIQVNVIHKAVGQISESDVVLAAASNAIIIGFQVRPSLQARRNAEKEGVEIRLYSIIYDAIEEVKSAMEGMLSPEIKEEITAYVEVQQVFKITKVGTVAGCMVKEGKIKRTNKIRLIRDGIVIYAGELGSLKRFKDDAKEVVAGLDCGLNITNFNDIQVGDMIEAYEETEIKKTL.

Over residues 97–135 (GHIDLDGGQHKKQQEEPKAKEEPKVKEEPKVKEEPKVKE) the composition is skewed to basic and acidic residues. Disordered regions lie at residues 97–343 (GHID…EDVQ) and 353–372 (LTNKNNKNNKGAKYRRDKRD). Over residues 136–155 (APAAPAAQAPVKPAQPAQAP) the composition is skewed to low complexity. 4 stretches are compositionally biased toward basic and acidic residues: residues 156–175 (TEKKEEKVIVVEVEKEKTVE), 183–204 (PKVESVKPEQEVEKTEEKDDNL), 212–224 (LESKIKVTGKIDL), and 237–250 (TKEEKRKERDEKQK). Low complexity predominate over residues 252–266 (NNNRPGNNSNGPGAP). Composition is skewed to basic and acidic residues over residues 315 to 326 (PNRDDRPNNDRK) and 333 to 343 (VKAEVSEEDVQ). One can recognise a tr-type G domain in the interval 472–642 (ARPPIVTVMG…LLEADLLDLK (171 aa)). The tract at residues 481-488 (GHVDHGKT) is G1. Residue 481-488 (GHVDHGKT) coordinates GTP. Residues 506-510 (GITQH) are G2. The tract at residues 528 to 531 (DTPG) is G3. Residues 528 to 532 (DTPGH) and 582 to 585 (NKID) contribute to the GTP site. A G4 region spans residues 582-585 (NKID). The G5 stretch occupies residues 618–620 (SAK).

Belongs to the TRAFAC class translation factor GTPase superfamily. Classic translation factor GTPase family. IF-2 subfamily.

It localises to the cytoplasm. One of the essential components for the initiation of protein synthesis. Protects formylmethionyl-tRNA from spontaneous hydrolysis and promotes its binding to the 30S ribosomal subunits. Also involved in the hydrolysis of GTP during the formation of the 70S ribosomal complex. This chain is Translation initiation factor IF-2, found in Parabacteroides distasonis (strain ATCC 8503 / DSM 20701 / CIP 104284 / JCM 5825 / NCTC 11152).